The sequence spans 440 residues: MKNYLSFGMFALLFALTFGTVNSVQAIAGPEWLLDRPSVNNSQLVVSVAGTVEGTNQDISLKFFEIDLTSRPAHGGKTEQGLSPKSKPFATDSGAMSHKLEKADLLKAIQEQLIANVHSNDDYFEVIDFASDATITDRNGKVYFADKDGSVTLPTQPVQEFLLSGHVRVRPYKEKPIQNQAKSVDVEYTVQFTPLNPDDDFRPGLKDTKLLKTLAIGDTITSQELLAQAQSILNKNHPGYTIYERDSSIVTHDNDIFRTILPMDQEFTYRVKNREQAYRINKKSGLNEEINNTDLISEKYYVLKKGEKPYDPFDRSHLKLFTIKYVDVDTNELLKSEQLLTASERNLDFRDLYDPRDKAKLLYNNLDAFGIMDYTLTGKVEDNHDDTNRIITVYMGKRPEGENASYHLAYDKDRYTEEEREVYSYLRYTGTPIPDNPNDK.

The signal sequence occupies residues 1–26; it reads MKNYLSFGMFALLFALTFGTVNSVQA.

Functionally, this protein is not a protease, but it activates plasminogen by complexing with it. As a potential virulence factor, it is thought to prevent the formation of effective fibrin barriers around the site of infection, thereby contributing to the invasiveness of the cells. This Streptococcus dysgalactiae subsp. equisimilis (Streptococcus equisimilis) protein is Streptokinase C (skc).